Here is a 276-residue protein sequence, read N- to C-terminus: UPF0276 protein Caul_0757 (276 aa).

This sequence belongs to the UPF0276 family.

In Caulobacter sp. (strain K31), this protein is UPF0276 protein Caul_0757.